A 452-amino-acid chain; its full sequence is MASPASITLAEVARHSSPNDLWIVIEGNVYDVAEYREDHPGGDEILRQFAGKDATTEFQDAGHSNDAYVKLKTLLVGSLQSKTLPENQPEESSRIVSIAVSDRGKIPTKRQARNGNDTSKYGQLPSLVLAGGLALLFFTLKQHPWQSIQGYLSQAQVSRVQSSGWVGFLGGFLTATTLNTAAATFVGLTAKKTLLLRHRELEEYPRVKQHYLPLPPKKPGISGENTQQFLTLVDRQCIAPNVYKVRLQGDGLVIGLGQHLKVLAEIDGRKIQRSYTPVSPVGNSPKVDLIIKVYPKGQLGNYLLNLPLQSRVEIRGPFGRYSPSPTWKHIACIAGGTGIAPIYQVMRAWPGEITLLYGNETWEDILLREELEQLVLQSPRRIKVHHVLGQPKSDWKGLRGWITREMIQDLLPEPSSSTGFLVCGPDGMVRAIRGHFEAIDANGEEKANVFVF.

Residues 4-80 (PASITLAEVA…LKTLLVGSLQ (77 aa)) form the Cytochrome b5 heme-binding domain. FMN is bound at residue 33–38 (AEYRED). His-39 and His-63 together coordinate heme. Residues 80 to 83 (QSKT) and 116 to 125 (NDTSKYGQLP) contribute to the FMN site. 2 helical membrane-spanning segments follow: residues 120–140 (KYGQLPSLVLAGGLALLFFTL) and 166–186 (VGFLGGFLTATTLNTAAATFV). One can recognise an FAD-binding FR-type domain in the interval 225–324 (NTQQFLTLVD…RGPFGRYSPS (100 aa)). 302–305 (YLLN) provides a ligand contact to FAD. Residues 389–390 (GQ) and 395–399 (WKGLR) contribute to the NADP(+) site.

The protein belongs to the flavoprotein pyridine nucleotide cytochrome reductase family. It depends on FAD as a cofactor. The cofactor is FMN.

The protein resides in the membrane. The protein operates within polyketide biosynthesis. In terms of biological role, NADH-cytochrome b5 reductase-like protein; part of the gene cluster that mediates the biosynthesis of asperlin, a polyketide showing anti-inflammatory, antitumor and antibiotic activities. The first step of the asperlin biosynthesis is the production of the intermediate 2,4,6-octatrienoic acid by the highly redusing polyketide synthase alnA with cleavage of the PKS product by the esterase alnB. 2,4,6-octatrienoic acid is further converted to asperlin via several steps involving the remaining enzymes from the cluster. This chain is NADH-cytochrome b5 reductase-like protein alnC, found in Emericella nidulans (strain FGSC A4 / ATCC 38163 / CBS 112.46 / NRRL 194 / M139) (Aspergillus nidulans).